The sequence spans 33 residues: Cytochrome b6-f complex subunit 6 (33 aa).

The chain crosses the membrane as a helical span at residues 4–24 (ITIISYFGLLLASIIFTLVLF).

The protein belongs to the PetL family. The 4 large subunits of the cytochrome b6-f complex are cytochrome b6, subunit IV (17 kDa polypeptide, PetD), cytochrome f and the Rieske protein, while the 4 small subunits are PetG, PetL, PetM and PetN. The complex functions as a dimer.

The protein localises to the plastid. Its subcellular location is the chloroplast thylakoid membrane. In terms of biological role, component of the cytochrome b6-f complex, which mediates electron transfer between photosystem II (PSII) and photosystem I (PSI), cyclic electron flow around PSI, and state transitions. PetL is important for photoautotrophic growth as well as for electron transfer efficiency and stability of the cytochrome b6-f complex. The protein is Cytochrome b6-f complex subunit 6 of Pinus mugo (Dwarf mountain pine).